We begin with the raw amino-acid sequence, 246 residues long: Purine nucleoside phosphorylase Cgl2154/cg2365 (246 aa).

The Zn(2+) site is built by His68, Cys107, and His124.

It belongs to the purine nucleoside phosphorylase YfiH/LACC1 family. In terms of assembly, homodimer. Cu(2+) serves as cofactor. Zn(2+) is required as a cofactor.

The catalysed reaction is adenosine + phosphate = alpha-D-ribose 1-phosphate + adenine. It catalyses the reaction S-methyl-5'-thioadenosine + phosphate = 5-(methylsulfanyl)-alpha-D-ribose 1-phosphate + adenine. The enzyme catalyses inosine + phosphate = alpha-D-ribose 1-phosphate + hypoxanthine. It carries out the reaction adenosine + H2O + H(+) = inosine + NH4(+). Its function is as follows. Purine nucleoside enzyme that catalyzes the phosphorolysis of adenosine and inosine nucleosides, yielding D-ribose 1-phosphate and the respective free bases, adenine and hypoxanthine. Also catalyzes the phosphorolysis of S-methyl-5'-thioadenosine into adenine and S-methyl-5-thio-alpha-D-ribose 1-phosphate. Also has adenosine deaminase activity. This chain is Purine nucleoside phosphorylase Cgl2154/cg2365, found in Corynebacterium glutamicum (strain ATCC 13032 / DSM 20300 / JCM 1318 / BCRC 11384 / CCUG 27702 / LMG 3730 / NBRC 12168 / NCIMB 10025 / NRRL B-2784 / 534).